We begin with the raw amino-acid sequence, 426 residues long: Glutamate-1-semialdehyde 2,1-aminomutase (426 aa).

At lysine 265 the chain carries N6-(pyridoxal phosphate)lysine.

Belongs to the class-III pyridoxal-phosphate-dependent aminotransferase family. HemL subfamily. In terms of assembly, homodimer. Pyridoxal 5'-phosphate is required as a cofactor.

Its subcellular location is the cytoplasm. It carries out the reaction (S)-4-amino-5-oxopentanoate = 5-aminolevulinate. It functions in the pathway porphyrin-containing compound metabolism; protoporphyrin-IX biosynthesis; 5-aminolevulinate from L-glutamyl-tRNA(Glu): step 2/2. The chain is Glutamate-1-semialdehyde 2,1-aminomutase from Klebsiella pneumoniae (strain 342).